A 477-amino-acid polypeptide reads, in one-letter code: UDP-galactose-lipid carrier transferase (477 aa).

6 consecutive transmembrane segments (helical) span residues 16-36 (SLALSDLIFFNIALALAIVLI), 52-72 (LDLKIATHILLSVICVGWFWV), 93-113 (TILIFSIVDLSVSALSKWELS), 115-135 (WIWILTWLLSMAMVPFGRACV), 175-195 (VIAFYDVDGSQTALELFGVPV), and 284-304 (FDLVGALSIITLLLPALVILI). Residues 305–477 (FMVSRDGGAP…GVVLKRDGAY (173 aa)) lie on the Cytoplasmic side of the membrane.

It belongs to the bacterial sugar transferase family.

It is found in the cell membrane. The protein operates within glycan metabolism; exopolysaccharide biosynthesis. Involved in the biosynthesis of amylovoran which functions as a virulence factor. May act as a sugar transferase and may be involved in the export of the repeating unit by flipping the lipid carrier to the periplasmic face of the inner membrane. The polypeptide is UDP-galactose-lipid carrier transferase (amsG) (Erwinia amylovora (Fire blight bacteria)).